Here is a 357-residue protein sequence, read N- to C-terminus: GDP-mannose transporter 2 (357 aa).

The Cytoplasmic portion of the chain corresponds to 1–33 (MASARNGVSKDELLPVYERRSQRDGDISGSVKS). A helical transmembrane segment spans residues 34 to 54 (FASTIGNSASAAVLAYCLSSI). At 55–68 (SMTLVNKYVVSGAS) the chain is on the lumenal side. Residues 69-89 (WNLSFLYLAMQSFIGTVAILA) traverse the membrane as a helical segment. Topologically, residues 90–107 (CKKTGLIQNLALFDLKKA) are cytoplasmic. A helical transmembrane segment spans residues 108-128 (QTWLPISLLLVGMIYTGNKAL). Residue glutamine 129 is a topological domain, lumenal. The helical transmembrane segment at 130–150 (FLSVPVYTIFKNLTIIVIAYG) threads the bilayer. The Cytoplasmic portion of the chain corresponds to 151-161 (EVLMVGGGVKP). A helical transmembrane segment spans residues 162-181 (LALLSFGLMVLSSVVAAWAD). At 182 to 196 (IQNATTATVGASSDS) the chain is on the lumenal side. An N-linked (GlcNAc...) asparagine glycan is attached at asparagine 184. The helical transmembrane segment at 197-217 (TAAALSALNAGYAWMGTNVIF) threads the bilayer. At 218–236 (SASYALGMRRVIKKTNFDN) the chain is on the cytoplasmic side. The helical transmembrane segment at 237–257 (WDVMFYNNLLSIPILLLASVL) threads the bilayer. The Lumenal segment spans residues 258-277 (AEDWSSENLQRNFPAELRQS). A helical transmembrane segment spans residues 278–298 (LFIGILYSGVAAVFISYCTAW). The Cytoplasmic portion of the chain corresponds to 299–306 (CVRATSST). Residues 307–327 (TYAMVGALNKLPLAVAGIVFF) form a helical membrane-spanning segment. Topologically, residues 328–332 (AAPVT) are lumenal. A helical transmembrane segment spans residues 333-352 (FGSVSAIVLGFISGLVYARA). At 353–357 (KSTGA) the chain is on the cytoplasmic side.

Belongs to the TPT transporter family. SLC35D subfamily. As to quaternary structure, homooligomer.

The protein resides in the golgi apparatus membrane. It localises to the cytoplasmic vesicle membrane. It is found in the endoplasmic reticulum membrane. Involved in the import of GDP-mannose from the cytoplasm into the Golgi lumen. The sequence is that of GDP-mannose transporter 2 (gmt2) from Neosartorya fischeri (strain ATCC 1020 / DSM 3700 / CBS 544.65 / FGSC A1164 / JCM 1740 / NRRL 181 / WB 181) (Aspergillus fischerianus).